The chain runs to 111 residues: Universal stress protein B (111 aa).

2 helical membrane-spanning segments follow: residues Met1–Arg21 and Phe90–Trp110.

It belongs to the universal stress protein B family.

The protein localises to the cell inner membrane. The sequence is that of Universal stress protein B from Yersinia enterocolitica serotype O:8 / biotype 1B (strain NCTC 13174 / 8081).